The following is a 222-amino-acid chain: Thiamine-phosphate synthase (222 aa).

4-amino-2-methyl-5-(diphosphooxymethyl)pyrimidine-binding positions include 44 to 48 (QFREK) and N79. Mg(2+) contacts are provided by D80 and D99. S117 serves as a coordination point for 4-amino-2-methyl-5-(diphosphooxymethyl)pyrimidine. A 2-[(2R,5Z)-2-carboxy-4-methylthiazol-5(2H)-ylidene]ethyl phosphate-binding site is contributed by 143 to 145 (TET). Position 146 (K146) interacts with 4-amino-2-methyl-5-(diphosphooxymethyl)pyrimidine. 2-[(2R,5Z)-2-carboxy-4-methylthiazol-5(2H)-ylidene]ethyl phosphate-binding positions include G175 and 195 to 196 (IS).

The protein belongs to the thiamine-phosphate synthase family. In terms of assembly, monomer. Mg(2+) is required as a cofactor.

It catalyses the reaction 2-[(2R,5Z)-2-carboxy-4-methylthiazol-5(2H)-ylidene]ethyl phosphate + 4-amino-2-methyl-5-(diphosphooxymethyl)pyrimidine + 2 H(+) = thiamine phosphate + CO2 + diphosphate. The catalysed reaction is 2-(2-carboxy-4-methylthiazol-5-yl)ethyl phosphate + 4-amino-2-methyl-5-(diphosphooxymethyl)pyrimidine + 2 H(+) = thiamine phosphate + CO2 + diphosphate. It carries out the reaction 4-methyl-5-(2-phosphooxyethyl)-thiazole + 4-amino-2-methyl-5-(diphosphooxymethyl)pyrimidine + H(+) = thiamine phosphate + diphosphate. The protein operates within cofactor biosynthesis; thiamine diphosphate biosynthesis; thiamine phosphate from 4-amino-2-methyl-5-diphosphomethylpyrimidine and 4-methyl-5-(2-phosphoethyl)-thiazole: step 1/1. Condenses 4-methyl-5-(beta-hydroxyethyl)thiazole monophosphate (THZ-P) and 2-methyl-4-amino-5-hydroxymethyl pyrimidine pyrophosphate (HMP-PP) to form thiamine monophosphate (TMP). Is also able to use the 2-methoxy analog MeO-HMP-PP, as substrate in vitro, but not the 2-trifluoromethyl analog CF(3)-HMP-PP. This is Thiamine-phosphate synthase (thiE) from Bacillus subtilis (strain 168).